Consider the following 257-residue polypeptide: Enterotoxin type A (257 aa).

An N-terminal signal peptide occupies residues Met1–Gly24. A disulfide bridge links Cys120 with Cys130. Positions 211, 249, and 251 each coordinate Zn(2+).

Belongs to the staphylococcal/streptococcal toxin family. As to quaternary structure, monomer. Interacts with MHC class II molecules alpha/HLA-DRB1 and beta/HLA-DRA chains. The interaction with MHC-II molecules occurs at both zinc-dependent and zinc-independent sites. Interacts with T-cell receptor beta variable 7-9/TRBV7-9. Zn(2+) serves as cofactor.

The protein resides in the secreted. Functionally, staphylococcal enterotoxin that activates the host immune system by binding as unprocessed molecules to major histocompatibility (MHC) complex class II and T-cell receptor (TCR) molecules. In turn, waves of cellular activation, cytokine production, and migration into the lung tissue and airways occur via alphabeta T-cells. Also causes the intoxication staphylococcal food poisoning syndrome. The illness is characterized by high fever, hypotension, diarrhea, shock, and in some cases death. The chain is Enterotoxin type A (entA) from Staphylococcus aureus.